The sequence spans 351 residues: Ion-translocating oxidoreductase complex subunit D (351 aa).

4 helical membrane passes run 20–40, 44–64, 89–109, and 123–143; these read IMLWVILACLPGMLAQVYFFG, LIQVGLASATALIAEGVTLSL, LPPLAPWWMVVMATVFAIIIA, and PAMIGYVVLLISFPVQMTSWL. T187 carries the FMN phosphoryl threonine modification. A run of 5 helical transmembrane segments spans residues 215 to 235, 244 to 264, 267 to 287, 301 to 321, and 322 to 342; these read LSGIGWQWVNIGFLIGGLFLL, IPVSFLLSLMFCALLSWIIAP, FAQPMLHLLSGATMLGAFFIA, LIFGALIGLLVWLIRTYGGYP, and DGVAFAVLLANITVPLIDYYT.

It belongs to the NqrB/RnfD family. As to quaternary structure, the complex is composed of six subunits: RnfA, RnfB, RnfC, RnfD, RnfE and RnfG. FMN serves as cofactor.

Its subcellular location is the cell inner membrane. In terms of biological role, part of a membrane-bound complex that couples electron transfer with translocation of ions across the membrane. This is Ion-translocating oxidoreductase complex subunit D from Pectobacterium atrosepticum (strain SCRI 1043 / ATCC BAA-672) (Erwinia carotovora subsp. atroseptica).